The primary structure comprises 241 residues: Carboxy-S-adenosyl-L-methionine synthase (241 aa).

S-adenosyl-L-methionine is bound by residues Y38, 63 to 65 (GCS), 88 to 89 (DN), 116 to 117 (DI), N131, and R198.

The protein belongs to the class I-like SAM-binding methyltransferase superfamily. Cx-SAM synthase family. Homodimer.

The enzyme catalyses prephenate + S-adenosyl-L-methionine = carboxy-S-adenosyl-L-methionine + 3-phenylpyruvate + H2O. In terms of biological role, catalyzes the conversion of S-adenosyl-L-methionine (SAM) to carboxy-S-adenosyl-L-methionine (Cx-SAM). This chain is Carboxy-S-adenosyl-L-methionine synthase, found in Histophilus somni (strain 129Pt) (Haemophilus somnus).